The sequence spans 222 residues: Large ribosomal subunit protein uL1 (222 aa).

This sequence belongs to the universal ribosomal protein uL1 family. In terms of assembly, part of the 50S ribosomal subunit.

Its function is as follows. Binds directly to 23S rRNA. Probably involved in E site tRNA release. Protein L1 is also a translational repressor protein, it controls the translation of its operon by binding to its mRNA. This is Large ribosomal subunit protein uL1 from Pyrobaculum calidifontis (strain DSM 21063 / JCM 11548 / VA1).